Consider the following 805-residue polypeptide: Polycystin-2-like protein 1 (805 aa).

Positions 1 to 59 are disordered; it reads MNAVGSPEGQELQKLGSGAWDNPAYSGPPSPHGTLRVCTISSTGPLQPQPKKPEDEPQE. At 1–103 the chain is on the cytoplasmic side; it reads MNAVGSPEGQ…ELYIKTTLRE (103 aa). Residue C38 is the site of S-palmitoyl cysteine attachment. Residues 104 to 124 form a helical membrane-spanning segment; it reads LLVYIVFLVDICLLTYGMTSS. Residues 125 to 356 are Extracellular-facing; it reads SAYYYTKVMS…NWDFFIVGCE (232 aa). N177 and N207 each carry an N-linked (GlcNAc...) asparagine glycan. C210 and C223 are oxidised to a cystine. N-linked (GlcNAc...) asparagine glycosylation occurs at N241. The helical transmembrane segment at 357-376 threads the bilayer; it reads VIFCVFIFYYVVEEILELHI. 2 residues coordinate Ca(2+): E370 and E373. At 377-384 the chain is on the cytoplasmic side; sequence HRLRYLSS. A helical transmembrane segment spans residues 385–405; sequence IWNILDLVVILLSIVAVGFHI. Ca(2+) contacts are provided by N387 and D390. The Extracellular portion of the chain corresponds to 406–433; that stretch reads FRTLEVNRLMGKLLQQPNTYADFEFLAF. A helical membrane pass occupies residues 434-454; that stretch reads WQTQYNNMNAVNLFFAWIKIF. Over 455–479 the chain is Cytoplasmic; that stretch reads KYISFNKTMTQLSSTLARCAKDILG. The helical transmembrane segment at 480-499 threads the bilayer; sequence FAVMFFIVFFAYAQLGYLLF. Topologically, residues 500–511 are extracellular; the sequence is GTQVENFSTFIK. N-linked (GlcNAc...) asparagine glycosylation occurs at N505. An intramembrane region (pore-forming) is located at residues 512-526; it reads CIFTQFRIILGDFDY. At 527–536 the chain is on the extracellular side; sequence NAIDNANRIL. Residues 537 to 557 form a helical membrane-spanning segment; the sequence is GPAYFVTYVFFVFFVLLNMFL. The Cytoplasmic segment spans residues 558 to 805; the sequence is AIINDTYSEV…RGEIPTLQRS (248 aa). The EF-hand domain occupies 633–668; that stretch reads HEITELTATFTKFDRDGNRILDEKEQEKMRQDLEEE. Coiled-coil stretches lie at residues 650–686 and 700–740; these read NRILDEKEQEKMRQDLEEERVALNTEIEKLGRSIVSS and GWVS…MLER. Residues 704 to 763 are required for homooligomerization; sequence GEEFYMLTRRVLQLETVLEGVVSQIDAVGSKLKMLERKGWLAPSPGVKEQAIWKHPQPAP. The segment at 759–805 is disordered; the sequence is PQPAPAVTPDPWGVQGGQESEVPYKREEEALEERRLSRGEIPTLQRS. Basic and acidic residues predominate over residues 780-796; that stretch reads VPYKREEEALEERRLSR.

This sequence belongs to the polycystin family. In terms of assembly, oligomer. Functional PKD2L1 homotetramer can be formed either through C-terminal trimerization followed by N-terminal dimerization of a fourth subunit with a subunit in the trimer or through dimerization followed by trimerization. Heterotetramer with either PKD1L1, PKD1L3 or PKD1; the heterotetrameric complex contains three PKD1L2 chains plus one chain from another family member. Interacts with PKD1L1, forming a ciliary calcium channel. Interacts with PKD1L3, forming a cation channel that is activated by low extracellular pH. Interacts with PKD1; this heteromeric functional cation channels is opened by hypo-osmotic stimulation. Interacts with RACK1; inhibits the channel activity possibly by impairing localization to the cell membrane. Palmitoylation is important for expression at the cell membrane and for channel activity. Detected in taste bud cells in fungiform papillae (at protein level). Ubiquitous. Expressed in adult heart, skeletal muscle, brain, spleen, testis, retina and liver. Isoform 4 appears to be expressed only in transformed lymphoblasts.

It localises to the cell projection. The protein localises to the cilium membrane. The protein resides in the cell membrane. It is found in the cytoplasmic vesicle. It catalyses the reaction Ca(2+)(in) = Ca(2+)(out). The catalysed reaction is Na(+)(in) = Na(+)(out). It carries out the reaction K(+)(in) = K(+)(out). The enzyme catalyses Mg(2+)(in) = Mg(2+)(out). Its activity is regulated as follows. The non-selective cation channel is gated following an off-response property by acid: gated open after the removal of acid stimulus, but not during acid application. Channel activity is inhibited by phosphatidylinositol-4,5-bisphosphate (PIP2). Non-selective cation channel activity is substantially increased when either the extracellular or intracellular calcium-ion concentration is raised. Regulation of non-selective cation channel activity by external calcium is bimodal, first sensitizing and subsequently inactivating the current. Functionally, homotetrameric, non-selective cation channel that is permeable to sodium, potassium, magnesium and calcium. Also forms functionnal heteromeric channels with PKD1, PKD1L1 and PKD1L3. Pore-forming subunit of a heterotetrameric, non-selective cation channel, formed by PKD1L2 and PKD1L3, that is permeable to sodium, potassium, magnesium and calcium and which may act as a sour taste receptor in gustatory cells; however, its contribution to sour taste perception is unclear in vivo and may be indirect. The homomeric and heteromeric channels formed by PKD1L2 and PKD1L3 are activated by low pH and Ca(2+), but opens only when the extracellular pH rises again and after the removal of acid stimulus. Pore-forming subunit of a calcium-permeant ion channel formed by PKD1L2 and PKD1L1 in primary cilia, where it controls cilium calcium concentration, without affecting cytoplasmic calcium concentration, and regulates sonic hedgehog/SHH signaling and GLI2 transcription. The PKD1L1:PKD2L1 complex channel is mechanosensitive only at high pressures and is highly temperature sensitive. Pore-forming subunit of a calcium-permeant ion channel formed by PKD1L2 and PKD1 that produces a transient increase in intracellular calcium concentration upon hypo-osmotic stimulation (200 mOsm). May play a role in the perception of carbonation taste. May play a role in the sensory perception of water, via a mechanism that activates the channel in response to dilution of salivary bicarbonate and changes in salivary pH. This is Polycystin-2-like protein 1 from Homo sapiens (Human).